A 302-amino-acid polypeptide reads, in one-letter code: Bifunctional protein FolD (302 aa).

Residues 165–167 (GRS), Ser-190, and Ile-231 contribute to the NADP(+) site.

This sequence belongs to the tetrahydrofolate dehydrogenase/cyclohydrolase family. In terms of assembly, homodimer.

The enzyme catalyses (6R)-5,10-methylene-5,6,7,8-tetrahydrofolate + NADP(+) = (6R)-5,10-methenyltetrahydrofolate + NADPH. It catalyses the reaction (6R)-5,10-methenyltetrahydrofolate + H2O = (6R)-10-formyltetrahydrofolate + H(+). The protein operates within one-carbon metabolism; tetrahydrofolate interconversion. In terms of biological role, catalyzes the oxidation of 5,10-methylenetetrahydrofolate to 5,10-methenyltetrahydrofolate and then the hydrolysis of 5,10-methenyltetrahydrofolate to 10-formyltetrahydrofolate. The chain is Bifunctional protein FolD from Prochlorococcus marinus (strain MIT 9303).